A 397-amino-acid polypeptide reads, in one-letter code: MDSLTKSINQFALEFSKKLAESAEGKNIFFSPWGISTSLAMVYLGTRGTTAAQIAQVLQFNRDQDSKFFPESEKKRKMDFNSRKVEEIRSDFQTLISEINNPSNAYVLKTANGIYGEKTYPFHNKYLEDMKTYFGVEPQSVNFLEAPDQTRNEINSWVESQTQGKILNLLPDDAVDSATRMVLVNAIYFKGIWEHQFSARDTREKPFRINKNTSKPVQMMSMKKKLQVFHIENPQAIGLQLYYESRDLSLFLLLPEDVSGLDQLEKAVTYEKLSEWTSADMMELYDVQLHLPKFKLEESYDLKSALSSMGMSDAFNQSKADFSGMSVEGNLFLSNVFHKSFVEINEQGTEASAGTGSEVSLRIRLPSIEFNADHPFLFFIRHNKTNSILFYGRFCSP.

Residues 74-77 (KKRK) carry the Nuclear localization signal motif.

The protein belongs to the serpin family. Ov-serpin subfamily.

The protein localises to the nucleus. Its subcellular location is the cytoplasm. In terms of biological role, protease inhibitor that may play a role in the regulation of protease activities during hematopoiesis and apoptosis induced by TNF. May regulate protease activities in the cytoplasm and in the nucleus. The sequence is that of Serpin B10 (SERPINB10) from Rhinolophus ferrumequinum (Greater horseshoe bat).